A 946-amino-acid polypeptide reads, in one-letter code: Bifunctional glutamine synthetase adenylyltransferase/adenylyl-removing enzyme (946 aa).

The tract at residues 1 to 440 (MKPLSSPLQQ…VFNELIGDDE (440 aa)) is adenylyl removase. The tract at residues 449–946 (SEQWRELWQD…ASWQKWLVEE (498 aa)) is adenylyl transferase.

Belongs to the GlnE family. It depends on Mg(2+) as a cofactor.

The catalysed reaction is [glutamine synthetase]-O(4)-(5'-adenylyl)-L-tyrosine + phosphate = [glutamine synthetase]-L-tyrosine + ADP. It carries out the reaction [glutamine synthetase]-L-tyrosine + ATP = [glutamine synthetase]-O(4)-(5'-adenylyl)-L-tyrosine + diphosphate. Functionally, involved in the regulation of glutamine synthetase GlnA, a key enzyme in the process to assimilate ammonia. When cellular nitrogen levels are high, the C-terminal adenylyl transferase (AT) inactivates GlnA by covalent transfer of an adenylyl group from ATP to specific tyrosine residue of GlnA, thus reducing its activity. Conversely, when nitrogen levels are low, the N-terminal adenylyl removase (AR) activates GlnA by removing the adenylyl group by phosphorolysis, increasing its activity. The regulatory region of GlnE binds the signal transduction protein PII (GlnB) which indicates the nitrogen status of the cell. The chain is Bifunctional glutamine synthetase adenylyltransferase/adenylyl-removing enzyme from Escherichia coli O81 (strain ED1a).